The sequence spans 320 residues: Lipoyl synthase (320 aa).

[4Fe-4S] cluster contacts are provided by Cys67, Cys72, Cys78, Cys93, Cys97, Cys100, and Ser307. One can recognise a Radical SAM core domain in the interval 79–296; the sequence is FNHGTATFMI…RDKANEMGFE (218 aa).

This sequence belongs to the radical SAM superfamily. Lipoyl synthase family. The cofactor is [4Fe-4S] cluster.

Its subcellular location is the cytoplasm. It carries out the reaction [[Fe-S] cluster scaffold protein carrying a second [4Fe-4S](2+) cluster] + N(6)-octanoyl-L-lysyl-[protein] + 2 oxidized [2Fe-2S]-[ferredoxin] + 2 S-adenosyl-L-methionine + 4 H(+) = [[Fe-S] cluster scaffold protein] + N(6)-[(R)-dihydrolipoyl]-L-lysyl-[protein] + 4 Fe(3+) + 2 hydrogen sulfide + 2 5'-deoxyadenosine + 2 L-methionine + 2 reduced [2Fe-2S]-[ferredoxin]. Its pathway is protein modification; protein lipoylation via endogenous pathway; protein N(6)-(lipoyl)lysine from octanoyl-[acyl-carrier-protein]: step 2/2. Catalyzes the radical-mediated insertion of two sulfur atoms into the C-6 and C-8 positions of the octanoyl moiety bound to the lipoyl domains of lipoate-dependent enzymes, thereby converting the octanoylated domains into lipoylated derivatives. The protein is Lipoyl synthase of Haemophilus influenzae (strain PittEE).